A 169-amino-acid chain; its full sequence is NADH-quinone oxidoreductase subunit I (169 aa).

4Fe-4S ferredoxin-type domains lie at 61-90 and 100-129; these read RKYK…IEAQ and VRYD…EGPN. Residues Cys70, Cys73, Cys76, Cys80, Cys109, Cys112, Cys115, and Cys119 each contribute to the [4Fe-4S] cluster site.

It belongs to the complex I 23 kDa subunit family. In terms of assembly, NDH-1 is composed of 14 different subunits. Subunits NuoA, H, J, K, L, M, N constitute the membrane sector of the complex. Requires [4Fe-4S] cluster as cofactor.

It is found in the cell inner membrane. The catalysed reaction is a quinone + NADH + 5 H(+)(in) = a quinol + NAD(+) + 4 H(+)(out). Functionally, NDH-1 shuttles electrons from NADH, via FMN and iron-sulfur (Fe-S) centers, to quinones in the respiratory chain. The immediate electron acceptor for the enzyme in this species is believed to be ubiquinone. Couples the redox reaction to proton translocation (for every two electrons transferred, four hydrogen ions are translocated across the cytoplasmic membrane), and thus conserves the redox energy in a proton gradient. This Ehrlichia chaffeensis (strain ATCC CRL-10679 / Arkansas) protein is NADH-quinone oxidoreductase subunit I.